Here is a 163-residue protein sequence, read N- to C-terminus: uncharacterized protein (163 aa).

The helical transmembrane segment at 7–23 (TLVAFIATFFNLAATSI) threads the bilayer.

It localises to the membrane. This is an uncharacterized protein from Saccharomyces cerevisiae (strain ATCC 204508 / S288c) (Baker's yeast).